A 1189-amino-acid polypeptide reads, in one-letter code: MSVACVLKRKAVLWQDSFSPHLKHHPQEPANPNMPVVLTSGTGSQAQPQPAANQALAAGTHSSPVPGSIGVAGRSQDDAMVDYFFQRQHGEQLGGGGSGGGGYNTSKHRWPTGDNIHAEHQVRSMDELNHDFQALALEGRAMGEQLLPGKKFWETDESSKDGPKGIFLGDQWRDSAWGTSDHSVSQPIMVQRRPGQSFHVNSEVNSVLSPRSESGGLGVSMVEYVLSSSPGDSCLRKGGFGPRDADSDENDKGEKKNKGTFDGDKLGDLKEEGDVMDKTNGLPVQNGIDADVKDFSRTPGNCQNSANEVDLLGPNQNGSEGLAQLTSTNGAKPVEDFSNMESQSVPLDPMEHVGMEPLQFDYSGTQVPVDSAAATVGLFDYNSQQQLFQRPNALAVQQLTAAQQQQYALAAAHQPHIAGLAPAAFVPNPYIISAAPPGTDPYTAGLAAAATLGPAVVPHQYYGVTPWGVYPASLFQQQAAAAAAATNSATQQSAPQAQQGQQQVLRGGASQRPLTPNQNQQGQQTDPLVAAAAVNSALAFGQGLAAGMPGYPVLAPAAYYDQTGALVVNAGARNGLGAPVRLVAPAPVIISSSAAQAAVAAAAASANGAAGGLAGTTNGPFRPLGTQQPQPQPQQQPSNNLASSSFYGNNSLSSNSQSSSLFSQGSAQPANTSLGFGSSSSLGATLGSALGGFGTAVANSNTGSGSRRDSLTGSSDLYKRTSSSLAPIGHSFYSSLSYSSSPGPVGMPLPSQGPGHSQTPPPSLSSHGSSSSLNLGGLTNGSGRYISAAPGAEAKYRSASSASSLFSPSSTLFSSSRLRYGMSDVMPSGRSRLLEDFRNNRYPNLQLREIAGHIMEFSQDQHGSRFIQLKLERATAAERQLVFNEILQAAYQLMVDVFGNYVIQKFFEFGSHEQKLALAERIRGHVLSLALQMYGCRVIQKALEFIPSDQQVINEMVRELDGHVLKCVKDQNGNHVVQKCIECVQPQSLQFIIDAFKGQVFALSTHPYGCRVIQRILEHCLPDQTLPILEELHQHTEQLVQDQYGNYVIQHVLEHGRPEDKSKIVAEIRGNVLVLSQHKFASNVVEKCVTHASRTERAVLIDEVCTMNDGPHSALYTMMKDQYANYVVQKMIDVAEPGQRKIVMHKIRPHIATLRKYTYGKHILAKLEKYYMKNGVDLGPICGPPNGII.

Residue serine 2 is modified to N-acetylserine. Serine 19 is subject to Phosphoserine. The disordered stretch occupies residues 22–73 (LKHHPQEPANPNMPVVLTSGTGSQAQPQPAANQALAAGTHSSPVPGSIGVAG). Residues 45-58 (QAQPQPAANQALAA) are compositionally biased toward low complexity. Phosphoserine occurs at positions 75, 98, and 106. Threonine 112 carries the post-translational modification Phosphothreonine. A phosphoserine mark is found at serine 124, serine 159, serine 197, serine 209, and serine 229. The interval 233–272 (SCLRKGGFGPRDADSDENDKGEKKNKGTFDGDKLGDLKEE) is disordered. Positions 250-272 (NDKGEKKNKGTFDGDKLGDLKEE) are enriched in basic and acidic residues. Serine 305 carries the post-translational modification Phosphoserine. Residues 491 to 503 (QQSAPQAQQGQQQ) show a composition bias toward low complexity. Disordered regions lie at residues 491–525 (QQSAPQAQQGQQQVLRGGASQRPLTPNQNQQGQQT) and 614–647 (AGTTNGPFRPLGTQQPQPQPQQQPSNNLASSSFY). Residues 512–525 (RPLTPNQNQQGQQT) show a composition bias toward polar residues. Threonine 515 bears the Phosphothreonine mark. The span at 627-647 (QQPQPQPQQQPSNNLASSSFY) shows a compositional bias: low complexity. Residues serine 710 and serine 715 each carry the phosphoserine modification. The segment at 743–773 (GPVGMPLPSQGPGHSQTPPPSLSSHGSSSSL) is disordered. Positions 764–773 (LSSHGSSSSL) are enriched in low complexity. Arginine 797 bears the Omega-N-methylarginine mark. Phosphoserine is present on residues serine 807 and serine 823. The 343-residue stretch at 829 to 1171 (GRSRLLEDFR…HILAKLEKYY (343 aa)) folds into the PUM-HD domain. Pumilio repeat units lie at residues 849–884 (EIAGHIMEFSQDQHGSRFIQLKLERATAAERQLVFN), 885–920 (EILQAAYQLMVDVFGNYVIQKFFEFGSHEQKLALAE), 921–958 (RIRGHVLSLALQMYGCRVIQKALEFIPSDQQVINEMVR), 959–994 (ELDGHVLKCVKDQNGNHVVQKCIECVQPQSLQFIID), 995–1030 (AFKGQVFALSTHPYGCRVIQRILEHCLPDQTLPILE), 1031–1066 (ELHQHTEQLVQDQYGNYVIQHVLEHGRPEDKSKIVA), 1067–1102 (EIRGNVLVLSQHKFASNVVEKCVTHASRTERAVLID), and 1106–1145 (TMNDGPHSALYTMMKDQYANYVVQKMIDVAEPGQRKIVMH). The adenine-nucleotide binding in RNA target stretch occupies residues 864-868 (SRFIQ). The tract at residues 900–904 (NYVIQ) is uracil-nucleotide binding in RNA target. An adenine-nucleotide binding in RNA target region spans residues 936 to 940 (CRVIQ). A non-specific-nucleotide binding in RNA target region spans residues 974–978 (NHVVQ). Residues 1010–1014 (CRVIQ) form an adenine-nucleotide binding in RNA target region. Positions 1046 to 1050 (NYVIQ) are uracil-nucleotide binding in RNA target. 2 guanine-nucleotide binding in RNA target regions span residues 1082–1086 (SNVVE) and 1083–1086 (NVVE). The interval 1125 to 1129 (NYVVQ) is uracil-nucleotide binding in RNA target.

As to quaternary structure, recruits the CCR4-POP2-NOT deadenylase leading to translational inhibition and mRNA degradation. Interacts with TRIM71 (via NHL repeats) in an RNA-dependent manner. Phosphorylation at Ser-715 promotes RNA-binding activity. Following growth factor stimulation phosphorylated at Ser-715, promoting binding to the 3'-UTR of CDKN1B/p27 mRNA. As to expression, widely expressed. Expressed in brain, heart, kidney, liver, lung, skin, intestine, spleen, testis and thymus. Weakly or not expressed in muscles and stomach. Expressed at various stages of myeloid and lymphoid cell development. Highly expressed in testis. Expressed in all major brain regions (at protein level).

It is found in the cytoplasm. The protein localises to the P-body. It localises to the cytoplasmic granule. In terms of biological role, sequence-specific RNA-binding protein that acts as a post-transcriptional repressor by binding the 3'-UTR of mRNA targets. Binds to an RNA consensus sequence, the Pumilio Response Element (PRE), 5'-UGUANAUA-3', that is related to the Nanos Response Element (NRE). Mediates post-transcriptional repression of transcripts via different mechanisms: acts via direct recruitment of the CCR4-POP2-NOT deadenylase leading to translational inhibition and mRNA degradation. Also mediates deadenylation-independent repression by promoting accessibility of miRNAs. Following growth factor stimulation, phosphorylated and binds to the 3'-UTR of CDKN1B/p27 mRNA, inducing a local conformational change that exposes miRNA-binding sites, promoting association of miR-221 and miR-222, efficient suppression of CDKN1B/p27 expression, and rapid entry to the cell cycle. Acts as a post-transcriptional repressor of E2F3 mRNAs by binding to its 3'-UTR and facilitating miRNA regulation. Represses a program of genes necessary to maintain genomic stability such as key mitotic, DNA repair and DNA replication factors. Its ability to repress those target mRNAs is regulated by the lncRNA NORAD (non-coding RNA activated by DNA damage) which, due to its high abundance and multitude of PUMILIO binding sites, is able to sequester a significant fraction of PUM1 and PUM2 in the cytoplasm. Involved in neuronal functions by regulating ATXN1 mRNA levels: acts by binding to the 3'-UTR of ATXN1 transcripts, leading to their down-regulation independently of the miRNA machinery. In testis, acts as a post-transcriptional regulator of spermatogenesis by binding to the 3'-UTR of mRNAs coding for regulators of p53/TP53. Involved in embryonic stem cell renewal by facilitating the exit from the ground state: acts by targeting mRNAs coding for naive pluripotency transcription factors and accelerates their down-regulation at the onset of differentiation. Binds specifically to miRNA MIR199A precursor, with PUM2, regulates miRNA MIR199A expression at a postranscriptional level. The chain is Pumilio homolog 1 from Mus musculus (Mouse).